The chain runs to 196 residues: Putative NADH dehydrogenase/NAD(P)H nitroreductase PXO_03909 (196 aa).

It belongs to the nitroreductase family. HadB/RutE subfamily. Requires FMN as cofactor.

In Xanthomonas oryzae pv. oryzae (strain PXO99A), this protein is Putative NADH dehydrogenase/NAD(P)H nitroreductase PXO_03909.